A 162-amino-acid polypeptide reads, in one-letter code: Nucleotide-binding protein SGR_2909 (162 aa).

The protein belongs to the YajQ family.

Its function is as follows. Nucleotide-binding protein. The sequence is that of Nucleotide-binding protein SGR_2909 from Streptomyces griseus subsp. griseus (strain JCM 4626 / CBS 651.72 / NBRC 13350 / KCC S-0626 / ISP 5235).